A 232-amino-acid polypeptide reads, in one-letter code: Exosome complex component RRP40 (232 aa).

This sequence belongs to the RRP40 family. In terms of assembly, component of the RNA exosome complex. Specifically part of the catalytically inactive RNA exosome core complex.

Its subcellular location is the cytoplasm. It localises to the nucleus. The protein resides in the nucleolus. In terms of biological role, non-catalytic component of the RNA exosome complex which has 3'-&gt;5' exoribonuclease activity and participates in a multitude of cellular RNA processing and degradation events. In the nucleus, the RNA exosome complex is involved in proper maturation of stable RNA species such as rRNA, snRNA and snoRNA, in the elimination of RNA processing by-products and non-coding 'pervasive' transcripts such as antisense RNA species, and of mRNAs with processing defects, thereby limiting or excluding their export to the cytoplasm. In the cytoplasm, the RNA exosome complex is involved in general mRNA turnover and specifically degrades inherently unstable mRNAs containing AU-rich elements (AREs) within their 3' untranslated regions, and in RNA surveillance pathways, preventing translation of aberrant mRNAs. The catalytic inactive RNA exosome core complex of 9 subunits is proposed to play a pivotal role in the binding and presentation of RNA for ribonucleolysis, and to serve as a scaffold for the association with catalytic subunits and accessory proteins or complexes. Required generally for normal embryonic and neuronal development. Also plays a critical role in the maintenance of neuronal function in mature flies by controlling the levels of specific mRNAs such as the synaptic regulator Arc1. In Drosophila melanogaster (Fruit fly), this protein is Exosome complex component RRP40.